Reading from the N-terminus, the 336-residue chain is Tyrosine recombinase XerC (336 aa).

A Core-binding (CB) domain is found at 14–106 (VARCRWLEPF…SVKSFYRFLL (93 aa)). A Tyr recombinase domain is found at 127 to 330 (KVPRFVSEEE…TFSRLKEIYD (204 aa)). Residues arginine 183, lysine 207, histidine 282, arginine 285, and histidine 308 contribute to the active site. Tyrosine 317 (O-(3'-phospho-DNA)-tyrosine intermediate) is an active-site residue.

The protein belongs to the 'phage' integrase family. XerC subfamily. As to quaternary structure, forms a cyclic heterotetrameric complex composed of two molecules of XerC and two molecules of XerD.

It localises to the cytoplasm. Its function is as follows. Site-specific tyrosine recombinase, which acts by catalyzing the cutting and rejoining of the recombining DNA molecules. The XerC-XerD complex is essential to convert dimers of the bacterial chromosome into monomers to permit their segregation at cell division. It also contributes to the segregational stability of plasmids. The chain is Tyrosine recombinase XerC from Chlorobaculum parvum (strain DSM 263 / NCIMB 8327) (Chlorobium vibrioforme subsp. thiosulfatophilum).